A 528-amino-acid polypeptide reads, in one-letter code: Protein HPH2 (528 aa).

Low complexity predominate over residues 1–13 (MQNAQIKSSSKGS). Disordered stretches follow at residues 1 to 52 (MQNA…STVE), 170 to 193 (AQQH…PSRS), 230 to 257 (ILPN…STQT), and 270 to 334 (ESSP…QSVA). Over residues 17-36 (GTDRNSKDGVEKRPLEDVKQ) the composition is skewed to basic and acidic residues. 2 stretches are compositionally biased toward low complexity: residues 283–296 (PSVA…VANP) and 308–332 (SFSQ…FSQS). A helical transmembrane segment spans residues 505–521 (ALDIVFLIIIIVICYTF).

In terms of assembly, interacts with HPH1/FRT1. Phosphorylated by CDC28.

It is found in the endoplasmic reticulum membrane. Required for growth under high NaCl, alkaline pH and cell wall stress. In Saccharomyces cerevisiae (strain ATCC 204508 / S288c) (Baker's yeast), this protein is Protein HPH2 (FRT2).